A 221-amino-acid chain; its full sequence is Iron-sulfur cluster repair protein YtfE (221 aa).

The protein belongs to the RIC family. YtfE subfamily. In terms of assembly, homodimer.

It is found in the cytoplasm. Di-iron-containing protein involved in the repair of iron-sulfur clusters damaged by oxidative and nitrosative stress conditions. The sequence is that of Iron-sulfur cluster repair protein YtfE from Yersinia pestis bv. Antiqua (strain Antiqua).